The following is a 521-amino-acid chain: Cytokinin dehydrogenase 9 (521 aa).

Residues 1–22 form the signal peptide; sequence MRPSLLQYLKLLLLLALGGVTT. Asparagine 57 is a glycosylation site (N-linked (GlcNAc...) asparagine). One can recognise an FAD-binding PCMH-type domain in the interval 59–237; sequence SSFPPVAVLH…TRARIPLEPA (179 aa). The FAD site is built by alanine 95, glycine 97, and glycine 99. Position 100 is a pros-8alpha-FAD histidine (histidine 100). Serine 101, glutamine 105, aspartate 161, threonine 166, serine 172, valine 176, and isoleucine 227 together coordinate FAD. 3 N-linked (GlcNAc...) asparagine glycosylation sites follow: asparagine 278, asparagine 412, and asparagine 418. Tyrosine 469 contributes to the FAD binding site. Residue asparagine 472 is glycosylated (N-linked (GlcNAc...) asparagine). Glutamine 507 is a binding site for FAD.

This sequence belongs to the oxygen-dependent FAD-linked oxidoreductase family. As to quaternary structure, monomer. FAD serves as cofactor. As to expression, expressed in inflorescence meristems.

It localises to the secreted. The protein localises to the extracellular space. It is found in the cytoplasm. The protein resides in the cytosol. Its subcellular location is the nucleus. It catalyses the reaction N(6)-dimethylallyladenine + A + H2O = 3-methyl-2-butenal + adenine + AH2. In terms of biological role, catalyzes the oxidation of cytokinins, a family of N(6)-substituted adenine derivatives that are plant hormones, where the substituent is an isopentenyl group. Possesses cytokinin oxidase activity toward trans-zeatin (tZ) and N6-(2-isopentenyl)adenine (2iP) in vitro. Functions as a primary strigolactone-responsive gene to regulate rice tillering, plant height, and panicle size, likely via a secondary response gene, RR5, which encodes a cytokinin-inducible rice type-A response regulator that seems to act as negative regulator of the cytokinin signaling. This Oryza sativa subsp. japonica (Rice) protein is Cytokinin dehydrogenase 9.